Here is a 113-residue protein sequence, read N- to C-terminus: U11-theraphotoxin-Hhn1a (113 aa).

Residues 1–21 (MNTVRATFLLVFVLAVSLGQA) form the signal peptide. A propeptide spanning residues 22-74 (DKDENRMEMQEKTEQGKSYLDFAENLLLQKLEELEAKLLEEDSEESRNSRQKR) is cleaved from the precursor. Basic and acidic residues predominate over residues 60 to 69 (LEEDSEESRN). Positions 60 to 82 (LEEDSEESRNSRQKRCIGEGVPC) are disordered. Cystine bridges form between Cys75–Cys90, Cys82–Cys95, and Cys89–Cys110.

This sequence belongs to the neurotoxin 14 (magi-1) family. 01 (HNTX-16) subfamily. In terms of tissue distribution, expressed by the venom gland.

Its subcellular location is the secreted. In terms of biological role, probable ion channel inhibitor. The protein is U11-theraphotoxin-Hhn1a of Cyriopagopus hainanus (Chinese bird spider).